A 183-amino-acid chain; its full sequence is Tetrahydromethanopterin S-methyltransferase subunit A 2 (183 aa).

Residues 1 to 101 (MFLMVEKKPV…TMKALHSNGV (101 aa)) are Cytoplasmic-facing. Position 87 (His-87) interacts with 5-hydroxybenzimidazolylcob(I)amide. A helical membrane pass occupies residues 102–118 (DLETGRIIGATGAIPYI). Residues 119 to 183 (ENMPEEAIER…IGKGDSEENT (65 aa)) are Extracellular-facing.

The protein belongs to the MtrA family. As to quaternary structure, the complex is composed of 8 subunits; MtrA, MtrB, MtrC, MtrD, MtrE, MtrF, MtrG and MtrH. 5-hydroxybenzimidazolylcob(I)amide serves as cofactor.

Its subcellular location is the cell membrane. The enzyme catalyses 5-methyl-5,6,7,8-tetrahydromethanopterin + coenzyme M + 2 Na(+)(in) = 5,6,7,8-tetrahydromethanopterin + methyl-coenzyme M + 2 Na(+)(out). It functions in the pathway one-carbon metabolism; methanogenesis from CO(2); methyl-coenzyme M from 5,10-methylene-5,6,7,8-tetrahydromethanopterin: step 2/2. In terms of biological role, part of a complex that catalyzes the formation of methyl-coenzyme M and tetrahydromethanopterin from coenzyme M and methyl-tetrahydromethanopterin. This is an energy-conserving, sodium-ion translocating step. The polypeptide is Tetrahydromethanopterin S-methyltransferase subunit A 2 (Methanothermobacter thermautotrophicus (strain ATCC 29096 / DSM 1053 / JCM 10044 / NBRC 100330 / Delta H) (Methanobacterium thermoautotrophicum)).